Reading from the N-terminus, the 92-residue chain is Bombyxin A-9 (92 aa).

An N-terminal signal peptide occupies residues 1-19 (MKLLLAIALMLTTVMWAST). At Gln-20 the chain carries Pyrrolidone carboxylic acid. 3 cysteine pairs are disulfide-bonded: Cys-29/Cys-79, Cys-41/Cys-92, and Cys-78/Cys-83. Positions 50-71 (SDAQFASYGSAWLMPYSEGRDQ) are cleaved as a propeptide — c peptide like.

The protein belongs to the insulin family. In terms of assembly, heterodimer of a B chain and an A chain linked by two disulfide bonds.

The protein localises to the secreted. Brain peptide responsible for activation of prothoracic glands to produce ecdysone in insects. This is Bombyxin A-9 (BBXA9) from Bombyx mori (Silk moth).